Here is a 280-residue protein sequence, read N- to C-terminus: MKRVKTYIPGLDEILYGGIPERHIVLVSGGPGTGKSILGKQFLYNGLTKGEGGVFIALEEHPVSVRRSFEHFKWDVRKYEREGKFAIIDTFTGGIGNVAQREKYVVKSIDDVKELSENIRAAIKDINATRIVVDSVSTLYLTKPAMARSIVMQLKRVISGLGCTAIFVSQVSVGERGFGGPGVEHAVDGIIRLDLDEVEGVMYRSIIIWKMRDTKISMVRHPMDITDNGIIVQWDKYLKISNWSVSIQPLPENEISQMKKAVEEAEKEVEVKVEGKEEEE.

Positions 2–246 constitute a KaiC domain; the sequence is KRVKTYIPGL…YLKISNWSVS (245 aa). 29 to 36 serves as a coordination point for ATP; it reads GGPGTGKS.

Belongs to the UPF0273 family.

This is UPF0273 protein SSO1861 from Saccharolobus solfataricus (strain ATCC 35092 / DSM 1617 / JCM 11322 / P2) (Sulfolobus solfataricus).